The following is a 540-amino-acid chain: Exopolysaccharide phosphotransferase SCO6022 (540 aa).

It belongs to the stealth family.

This Streptomyces coelicolor (strain ATCC BAA-471 / A3(2) / M145) protein is Exopolysaccharide phosphotransferase SCO6022.